Here is a 350-residue protein sequence, read N- to C-terminus: tRNA uridine(34) hydroxylase (350 aa).

Residues 146–240 (DDPDAVFIDM…YARRAREQGL (95 aa)) enclose the Rhodanese domain. Catalysis depends on cysteine 200, which acts as the Cysteine persulfide intermediate. The span at 319 to 328 (RRRRAGRENG) shows a compositional bias: basic and acidic residues. The segment at 319–350 (RRRRAGRENGNKIFNKSRGRLNSKLSIPDPAE) is disordered.

This sequence belongs to the TrhO family.

The enzyme catalyses uridine(34) in tRNA + AH2 + O2 = 5-hydroxyuridine(34) in tRNA + A + H2O. Its function is as follows. Catalyzes oxygen-dependent 5-hydroxyuridine (ho5U) modification at position 34 in tRNAs. The polypeptide is tRNA uridine(34) hydroxylase (Salmonella gallinarum (strain 287/91 / NCTC 13346)).